The sequence spans 116 residues: MATNNGAGKARHKFHVKKGDTVQVISGKDKGKVGKVSEVLPTAGKVIVEGVNMQTKHVKPQGDQQGQTLRREAPIYSCKVMLYSDKKKQASRVGHTVTDAGKKVRVLKKTGEILDK.

Residues 1–21 (MATNNGAGKARHKFHVKKGDT) form a disordered region.

Belongs to the universal ribosomal protein uL24 family. As to quaternary structure, part of the 50S ribosomal subunit.

One of two assembly initiator proteins, it binds directly to the 5'-end of the 23S rRNA, where it nucleates assembly of the 50S subunit. Functionally, one of the proteins that surrounds the polypeptide exit tunnel on the outside of the subunit. This chain is Large ribosomal subunit protein uL24, found in Gloeobacter violaceus (strain ATCC 29082 / PCC 7421).